Here is a 202-residue protein sequence, read N- to C-terminus: Imidazole glycerol phosphate synthase subunit HisH 2 (202 aa).

The 202-residue stretch at 1–202 (MIVVIDYGVG…QLFKNFVELV (202 aa)) folds into the Glutamine amidotransferase type-1 domain. Residue C80 is the Nucleophile of the active site. Catalysis depends on residues H183 and E185.

In terms of assembly, heterodimer of HisH and HisF.

The protein localises to the cytoplasm. The catalysed reaction is 5-[(5-phospho-1-deoxy-D-ribulos-1-ylimino)methylamino]-1-(5-phospho-beta-D-ribosyl)imidazole-4-carboxamide + L-glutamine = D-erythro-1-(imidazol-4-yl)glycerol 3-phosphate + 5-amino-1-(5-phospho-beta-D-ribosyl)imidazole-4-carboxamide + L-glutamate + H(+). It carries out the reaction L-glutamine + H2O = L-glutamate + NH4(+). It participates in amino-acid biosynthesis; L-histidine biosynthesis; L-histidine from 5-phospho-alpha-D-ribose 1-diphosphate: step 5/9. IGPS catalyzes the conversion of PRFAR and glutamine to IGP, AICAR and glutamate. The HisH subunit catalyzes the hydrolysis of glutamine to glutamate and ammonia as part of the synthesis of IGP and AICAR. The resulting ammonia molecule is channeled to the active site of HisF. In Pseudomonas aeruginosa (strain ATCC 15692 / DSM 22644 / CIP 104116 / JCM 14847 / LMG 12228 / 1C / PRS 101 / PAO1), this protein is Imidazole glycerol phosphate synthase subunit HisH 2 (hisH2).